The sequence spans 207 residues: NADH-quinone oxidoreductase subunit A (207 aa).

Transmembrane regions (helical) follow at residues 6 to 26 (WSAIAFILAAIALVVFMLVVP), 62 to 82 (LVAIFFVIFDLEALYLYAYAV), and 87 to 107 (AGWLGFAAAAIFITILIIGLV).

It belongs to the complex I subunit 3 family. As to quaternary structure, NDH-1 is composed of 14 different subunits. Subunits NuoA, H, J, K, L, M, N constitute the membrane sector of the complex.

It is found in the cell inner membrane. It catalyses the reaction a quinone + NADH + 5 H(+)(in) = a quinol + NAD(+) + 4 H(+)(out). Its function is as follows. NDH-1 shuttles electrons from NADH, via FMN and iron-sulfur (Fe-S) centers, to quinones in the respiratory chain. The immediate electron acceptor for the enzyme in this species is believed to be ubiquinone. Couples the redox reaction to proton translocation (for every two electrons transferred, four hydrogen ions are translocated across the cytoplasmic membrane), and thus conserves the redox energy in a proton gradient. The chain is NADH-quinone oxidoreductase subunit A from Psychrobacter arcticus (strain DSM 17307 / VKM B-2377 / 273-4).